A 172-amino-acid chain; its full sequence is Large ribosomal subunit protein uL10 (172 aa).

This sequence belongs to the universal ribosomal protein uL10 family. In terms of assembly, part of the ribosomal stalk of the 50S ribosomal subunit. The N-terminus interacts with L11 and the large rRNA to form the base of the stalk. The C-terminus forms an elongated spine to which L12 dimers bind in a sequential fashion forming a multimeric L10(L12)X complex.

In terms of biological role, forms part of the ribosomal stalk, playing a central role in the interaction of the ribosome with GTP-bound translation factors. The protein is Large ribosomal subunit protein uL10 of Brucella anthropi (strain ATCC 49188 / DSM 6882 / CCUG 24695 / JCM 21032 / LMG 3331 / NBRC 15819 / NCTC 12168 / Alc 37) (Ochrobactrum anthropi).